Here is a 39-residue protein sequence, read N- to C-terminus: uncharacterized protein (39 aa).

Over residues 1 to 16 (MLNIQPTQSIVNNQPK) the composition is skewed to polar residues. The disordered stretch occupies residues 1–39 (MLNIQPTQSIVNNQPKSDQKKQKPADLLKEFYDKTGNRN). The segment covering 17–39 (SDQKKQKPADLLKEFYDKTGNRN) has biased composition (basic and acidic residues).

This is an uncharacterized protein from Dictyostelium discoideum (Social amoeba).